The sequence spans 293 residues: Foldase protein PrsA 2 (293 aa).

Positions 1-20 are cleaved as a signal peptide; the sequence is MKKKLILGLVMMMALFSLAA. C21 carries N-palmitoyl cysteine lipidation. A lipid anchor (S-diacylglycerol cysteine) is attached at C21. The PpiC domain occupies 135 to 226; the sequence is QPDITVSHIL…YGYHIIQMDK (92 aa).

The protein belongs to the PrsA family.

The protein resides in the cell membrane. The enzyme catalyses [protein]-peptidylproline (omega=180) = [protein]-peptidylproline (omega=0). Functionally, plays a major role in protein secretion by helping the post-translocational extracellular folding of several secreted proteins. This Listeria monocytogenes serotype 4b (strain F2365) protein is Foldase protein PrsA 2.